The primary structure comprises 428 residues: Cell division cycle 20.6, cofactor of APC complex (428 aa).

WD repeat units follow at residues 106-145 (WFLTDNLVFFFVDIEEYIVIEQLGDTVYLWDASSCYTSKL), 150-189 (DENGPVTSINWTQDGLDLAVGLDNSEVQVWDCVSNRHVRT), 193-230 (GHESRVGSLAWNNHILTTGGMDGKIVNNDVRIRSSIIG), 234-273 (GHTEEVCGLKWSESGKKLASGGNDNVVHIWDRSLASSNPT), 282-324 (EHTA…CLNS), 326-367 (ETGS…KMAE), and 370-409 (GHTSRVLFMAQSPDGCTVASAAGDETLRLWNVFGEPPKTT).

It belongs to the WD repeat CDC20/Fizzy family. As to quaternary structure, the APC/C is composed of at least 11 subunits that stay tightly associated throughout the cell cycle.

The protein localises to the nucleus. It participates in protein modification; protein ubiquitination. Component of the anaphase promoting complex/cyclosome (APC/C), a cell cycle-regulated E3 ubiquitin-protein ligase complex that controls progression through mitosis and the G1 phase of the cell cycle. The chain is Cell division cycle 20.6, cofactor of APC complex (CDC20-6) from Arabidopsis thaliana (Mouse-ear cress).